Here is a 470-residue protein sequence, read N- to C-terminus: Neuraminidase (470 aa).

Over 1 to 6 the chain is Intravirion; it reads MNPNQK. The chain crosses the membrane as a helical span at residues 7 to 27; sequence IITIGSASIVLTTIGLLLQIT. Residues 11-33 are involved in apical transport and lipid raft association; sequence GSASIVLTTIGLLLQITSLCSIW. At 28-470 the chain is on the virion surface side; that stretch reads SLCSIWFSHY…GALLPFDIDK (443 aa). Positions 36–88 are hypervariable stalk region; sequence HYNQVTQPHEQACSNNTTNYYNETFVNVTNVQNNYTTIIEPSAPNVVHYSSGR. Asn50, Asn51, Asn57, Asn62, and Asn69 each carry an N-linked (GlcNAc...) asparagine; by host glycan. The head of neuraminidase stretch occupies residues 90 to 470; the sequence is LCPVKGWAPL…GALLPFDIDK (381 aa). 8 disulfides stabilise this stretch: Cys91-Cys418, Cys123-Cys128, Cys183-Cys230, Cys232-Cys237, Cys278-Cys291, Cys280-Cys289, Cys317-Cys334, and Cys422-Cys447. Arg117 contacts substrate. N-linked (GlcNAc...) asparagine; by host glycosylation occurs at Asn145. The active-site Proton donor/acceptor is Asp150. A substrate-binding site is contributed by Arg151. Asn269 is a glycosylation site (N-linked (GlcNAc...) asparagine; by host). 276-277 is a binding site for substrate; it reads EE. Position 292 (Arg292) interacts with substrate. Residues Asp293, Gly297, and Asp323 each contribute to the Ca(2+) site. A substrate-binding site is contributed by Arg369. Asn399 carries an N-linked (GlcNAc...) asparagine; by host glycan. Catalysis depends on Tyr403, which acts as the Nucleophile. Asn417 carries N-linked (GlcNAc...) asparagine; by host glycosylation.

Belongs to the glycosyl hydrolase 34 family. In terms of assembly, homotetramer. Ca(2+) serves as cofactor. Post-translationally, N-glycosylated.

It is found in the virion membrane. The protein localises to the host apical cell membrane. It carries out the reaction Hydrolysis of alpha-(2-&gt;3)-, alpha-(2-&gt;6)-, alpha-(2-&gt;8)- glycosidic linkages of terminal sialic acid residues in oligosaccharides, glycoproteins, glycolipids, colominic acid and synthetic substrates.. Its activity is regulated as follows. Inhibited by the neuraminidase inhibitors zanamivir (Relenza) and oseltamivir (Tamiflu). These drugs interfere with the release of progeny virus from infected cells and are effective against all influenza strains. Resistance to neuraminidase inhibitors is quite rare. Catalyzes the removal of terminal sialic acid residues from viral and cellular glycoconjugates. Cleaves off the terminal sialic acids on the glycosylated HA during virus budding to facilitate virus release. Additionally helps virus spread through the circulation by further removing sialic acids from the cell surface. These cleavages prevent self-aggregation and ensure the efficient spread of the progeny virus from cell to cell. Otherwise, infection would be limited to one round of replication. Described as a receptor-destroying enzyme because it cleaves a terminal sialic acid from the cellular receptors. May facilitate viral invasion of the upper airways by cleaving the sialic acid moieties on the mucin of the airway epithelial cells. Likely to plays a role in the budding process through its association with lipid rafts during intracellular transport. May additionally display a raft-association independent effect on budding. Plays a role in the determination of host range restriction on replication and virulence. Sialidase activity in late endosome/lysosome traffic seems to enhance virus replication. This is Neuraminidase from Influenza A virus (strain A/Turkey/Ontario/6118/1968 H8N4).